Here is a 353-residue protein sequence, read N- to C-terminus: Protein RecA (353 aa).

An ATP-binding site is contributed by 67 to 74 (GPESSGKT).

Belongs to the RecA family.

It localises to the cytoplasm. In terms of biological role, can catalyze the hydrolysis of ATP in the presence of single-stranded DNA, the ATP-dependent uptake of single-stranded DNA by duplex DNA, and the ATP-dependent hybridization of homologous single-stranded DNAs. It interacts with LexA causing its activation and leading to its autocatalytic cleavage. The polypeptide is Protein RecA (Shewanella sediminis (strain HAW-EB3)).